We begin with the raw amino-acid sequence, 533 residues long: Chromosomal replication initiator protein DnaA (533 aa).

The segment at 1 to 72 (MNDFWQHCSA…DLARDFWNAP (72 aa)) is domain I, interacts with DnaA modulators. The domain II stretch occupies residues 72–196 (PIEVQFVLDP…EAADSMYERS (125 aa)). The segment at 83–113 (AGQRSPAGATPLAPRAPLPSANPAPVAPGPA) is disordered. Residues 96–110 (PRAPLPSANPAPVAP) are compositionally biased toward pro residues. Residues 197 to 413 (KLNPVLTFDN…GALRKILAYS (217 aa)) are domain III, AAA+ region. Gly-241, Gly-243, Lys-244, and Thr-245 together coordinate ATP. The segment at 414-533 (KFHGREITIE…LHVLEQTLKG (120 aa)) is domain IV, binds dsDNA.

It belongs to the DnaA family. In terms of assembly, oligomerizes as a right-handed, spiral filament on DNA at oriC.

The protein localises to the cytoplasm. Functionally, plays an essential role in the initiation and regulation of chromosomal replication. ATP-DnaA binds to the origin of replication (oriC) to initiate formation of the DNA replication initiation complex once per cell cycle. Binds the DnaA box (a 9 base pair repeat at the origin) and separates the double-stranded (ds)DNA. Forms a right-handed helical filament on oriC DNA; dsDNA binds to the exterior of the filament while single-stranded (ss)DNA is stabiized in the filament's interior. The ATP-DnaA-oriC complex binds and stabilizes one strand of the AT-rich DNA unwinding element (DUE), permitting loading of DNA polymerase. After initiation quickly degrades to an ADP-DnaA complex that is not apt for DNA replication. Binds acidic phospholipids. This chain is Chromosomal replication initiator protein DnaA, found in Burkholderia mallei (strain SAVP1).